The chain runs to 493 residues: NADH-ubiquinone oxidoreductase 51 kDa subunit, mitochondrial (493 aa).

Residues 1 to 27 constitute a mitochondrion transit peptide; the sequence is MLSRTAAPTKASARTLSRAAAEQCRTF. An NAD(+)-binding site is contributed by 96–105; the sequence is GRGGAGFPSG. Residue 212-259 participates in FMN binding; that stretch reads GAGAYVCGEETSLIESLEGKPGKPRLKPPFPAAVGLFGCPSTVANVET. [4Fe-4S] cluster-binding residues include Cys391, Cys394, Cys397, and Cys437.

This sequence belongs to the complex I 51 kDa subunit family. Complex I is composed of about 40 different subunits. This is a component of the flavoprotein-sulfur (FP) fragment of the enzyme. FMN serves as cofactor. It depends on [4Fe-4S] cluster as a cofactor.

The protein localises to the mitochondrion inner membrane. The catalysed reaction is a ubiquinone + NADH + 5 H(+)(in) = a ubiquinol + NAD(+) + 4 H(+)(out). Functionally, core subunit of the mitochondrial membrane respiratory chain NADH dehydrogenase (Complex I) that is believed to belong to the minimal assembly required for catalysis. Complex I functions in the transfer of electrons from NADH to the respiratory chain. The immediate electron acceptor for the enzyme is believed to be ubiquinone. The polypeptide is NADH-ubiquinone oxidoreductase 51 kDa subunit, mitochondrial (nuo-51) (Neurospora crassa (strain ATCC 24698 / 74-OR23-1A / CBS 708.71 / DSM 1257 / FGSC 987)).